The primary structure comprises 419 residues: Tyrosine--tRNA ligase (419 aa).

Tyr34 serves as a coordination point for L-tyrosine. A 'HIGH' region motif is present at residues 39 to 48; the sequence is PSGDSMHIGH. L-tyrosine contacts are provided by Tyr168 and Gln172. The 'KMSKS' region signature appears at 230 to 234; sequence KFGKS. Position 233 (Lys233) interacts with ATP. Residues 352–418 enclose the S4 RNA-binding domain; that stretch reads ANLVDWLVTL…GKKKYFLVSY (67 aa).

This sequence belongs to the class-I aminoacyl-tRNA synthetase family. TyrS type 1 subfamily. In terms of assembly, homodimer.

The protein localises to the cytoplasm. It catalyses the reaction tRNA(Tyr) + L-tyrosine + ATP = L-tyrosyl-tRNA(Tyr) + AMP + diphosphate + H(+). In terms of biological role, catalyzes the attachment of tyrosine to tRNA(Tyr) in a two-step reaction: tyrosine is first activated by ATP to form Tyr-AMP and then transferred to the acceptor end of tRNA(Tyr). This is Tyrosine--tRNA ligase from Listeria monocytogenes serotype 4a (strain HCC23).